The following is a 373-amino-acid chain: MPTPSHLKNPLCFDFRAARRVPETHAWPGLDDHPVVDGGGGGGEDAVPVVDVGAGDAAARVARAAEQWGAFLLVGHGVPAALLSRVEERVARVFSLPASEKMRAVRGPGEPCGYGSPPISSFFSKLMWSEGYTFSPSSLRSELRRLWPKSGDDYLLFCDVMEEFHKEMRRLADELLRLFLRALGLTGEEVAGVEAERRIGERMTATVHLNWYPRCPEPRRALGLIAHTDSGFFTFVLQSLVPGLQLFRRGPDRWVAVPAVAGAFVVNVGDLFHILTNGRFHSVYHRAVVNRDRDRVSLGYFLGPPPDAEVAPLPEAVPAGRSPAYRAVTWPEYMAVRKKAFATGGSALKMVSTDAAAAADEHDDVAAAADVHA.

One can recognise a Fe2OG dioxygenase domain in the interval 203–304 (MTATVHLNWY…RVSLGYFLGP (102 aa)). Y212 lines the 2-oxoglutarate pocket. Residues H227, D229, and H285 each contribute to the Fe cation site. 2-oxoglutarate-binding residues include R295 and S297.

This sequence belongs to the iron/ascorbate-dependent oxidoreductase family. Requires L-ascorbate as cofactor. It depends on Fe(2+) as a cofactor. In terms of tissue distribution, highly expressed in elongating leaves. Expressed in unopened flowers. Expressed at low levels in leaf blades, shoots, rachis, stems and young panicles.

It catalyses the reaction gibberellin A20 + 2-oxoglutarate + O2 = gibberellin A1 + succinate + CO2. It participates in plant hormone biosynthesis; gibberellin biosynthesis. Functionally, catalyzes the 3-beta-hydroxylation of the inactive gibberellin precursors, leading to the formation of bioactive gibberellins. In vitro, converts the precursors GA20, GA5, GA44 and GA9 to the corresponding 3-beta-hydroxylated active products GA1, GA3, GA38 and GA4, respectively. Involved in the production of bioactive GA for vegetative growth and development. Controls the elongation of the vegetative shoot and plant height by the regulation of active gibberellin levels. In Oryza sativa subsp. japonica (Rice), this protein is Gibberellin 3-beta-dioxygenase 2.